The sequence spans 248 residues: 2,3-bisphosphoglycerate-dependent phosphoglycerate mutase (248 aa).

Substrate is bound by residues 8–15, 21–22, Arg60, 87–90, Lys98, 114–115, and 183–184; these read RHGESTWN, TG, ERHY, RR, and GN. Catalysis depends on His9, which acts as the Tele-phosphohistidine intermediate. The Proton donor/acceptor role is filled by Glu87.

It belongs to the phosphoglycerate mutase family. BPG-dependent PGAM subfamily. As to quaternary structure, homodimer.

The catalysed reaction is (2R)-2-phosphoglycerate = (2R)-3-phosphoglycerate. Its pathway is carbohydrate degradation; glycolysis; pyruvate from D-glyceraldehyde 3-phosphate: step 3/5. Its function is as follows. Catalyzes the interconversion of 2-phosphoglycerate and 3-phosphoglycerate. The polypeptide is 2,3-bisphosphoglycerate-dependent phosphoglycerate mutase (Ralstonia nicotianae (strain ATCC BAA-1114 / GMI1000) (Ralstonia solanacearum)).